The sequence spans 307 residues: tRNA pseudouridine synthase B (307 aa).

The active-site Nucleophile is D38.

It belongs to the pseudouridine synthase TruB family. Type 1 subfamily.

The enzyme catalyses uridine(55) in tRNA = pseudouridine(55) in tRNA. Responsible for synthesis of pseudouridine from uracil-55 in the psi GC loop of transfer RNAs. The sequence is that of tRNA pseudouridine synthase B from Bacillus anthracis.